The chain runs to 231 residues: 7-cyano-7-deazaguanine synthase (231 aa).

8 to 18 (FSGGQDSTTCL) is a binding site for ATP. Residues C188, C197, C200, and C203 each coordinate Zn(2+).

Belongs to the QueC family. The cofactor is Zn(2+).

It catalyses the reaction 7-carboxy-7-deazaguanine + NH4(+) + ATP = 7-cyano-7-deazaguanine + ADP + phosphate + H2O + H(+). The protein operates within purine metabolism; 7-cyano-7-deazaguanine biosynthesis. Its function is as follows. Catalyzes the ATP-dependent conversion of 7-carboxy-7-deazaguanine (CDG) to 7-cyano-7-deazaguanine (preQ(0)). The chain is 7-cyano-7-deazaguanine synthase from Salmonella paratyphi A (strain ATCC 9150 / SARB42).